A 447-amino-acid polypeptide reads, in one-letter code: Growth/differentiation factor 7 (447 aa).

Positions 1–19 (MDLSAAAALCLWLLSACRP) are cleaved as a signal peptide. A propeptide spanning residues 20–318 (RDGLEAAAVL…AVTAGRRRRR (299 aa)) is cleaved from the precursor. N-linked (GlcNAc...) asparagine glycosylation is present at asparagine 80. The segment at 292–346 (LAAQPPPDPGTGTGSPRAVTAGRRRRRTALAGTRTAQGSGGGAGRGHGRRGRSRC) is disordered. Basic residues predominate over residues 337–346 (GHGRRGRSRC). Disulfide bonds link cysteine 346–cysteine 412, cysteine 375–cysteine 444, and cysteine 379–cysteine 446.

It belongs to the TGF-beta family. Homodimer; disulfide-linked. In terms of tissue distribution, highly expressed in the primary aera of brain neocortex.

It is found in the secreted. In terms of biological role, may play an active role in the motor area of the primate neocortex. This is Growth/differentiation factor 7 (GDF7) from Chlorocebus aethiops (Green monkey).